The sequence spans 87 residues: Small ribosomal subunit protein bS20 (87 aa).

It belongs to the bacterial ribosomal protein bS20 family.

In terms of biological role, binds directly to 16S ribosomal RNA. This is Small ribosomal subunit protein bS20 from Alkaliphilus metalliredigens (strain QYMF).